Consider the following 38-residue polypeptide: Alpha-conotoxin PeIA (38 aa).

The propeptide occupies 1–21 (FDGRNAAANDKASDLVALTVR). Cystine bridges form between Cys-23-Cys-29 and Cys-24-Cys-37. Positions 25–27 (SHP) are ser-Xaa-Pro motif, crucial for potent interaction with nAChR. Cys-37 bears the Cysteine amide mark.

This sequence belongs to the conotoxin A superfamily. Post-translationally, the hydroxylation at position Pro-27 is critical, since an hydroxylation at this position decreases potency of the toxin to inhibit both alpha-3-beta-2 (1300-fold) and alpha-6/alpha-3-beta-2-beta-3 (130-fold) nAChRs. In terms of processing, a non-modified residue at position Pro-34 is critical, since a hydroxylation at this position decreases potency of the toxin to inhibit alpha-3-beta-2 (1-45-fold) and increases potency to inhibit alpha-6/alpha-3-beta-2-beta-3 (1.77-fold) nAChRs. In terms of tissue distribution, expressed by the venom duct.

The protein resides in the secreted. In terms of biological role, alpha-conotoxins act on postsynaptic membranes, they bind to the nicotinic acetylcholine receptors (nAChR) and thus inhibit them. This synthetic peptide potently and reversibly blocks alpha-9-alpha-10/CHRNA9-CHRNA10 nAChR (IC(50)=6.9-54.9 nM), alpha-3-beta-2/CHRNA3-CHRNB2 (IC(50)=9.7-97.5 nM) and alpha-6/alpha-3-beta-2-beta-3 (CHRNA6/CHRNA3-CHRNB2-CHRNB3) (IC(50)=11.1-17.2 nM). It also inhibits alpha-6/alpha-3-beta-4 (CHRNA6/CHRNA3-CHRNB4) nAChR with a higher potency on human (IC(50)=6.75 nM) than on rat receptors (IC(50)=130-147 nM). Also shows a weak ability to inhibit alpha-3-beta-4/CHRNA3-CHRNB4 (IC(50)=480-1500 nM). This synthetic toxin also inhibits N-type calcium channels (Ca2.2/CACNA1B) (IC(50)=1.1 nM) via the activation of the G protein-coupled GABA(B) receptor in DRG neurons. Also exhibits inhibition of D.melanogaster alpha-7/CHRNA7 nAChRs. The sequence is that of Alpha-conotoxin PeIA from Conus pergrandis (Grand cone).